Reading from the N-terminus, the 304-residue chain is Protease HtpX homolog (304 aa).

Helical transmembrane passes span 14 to 34 (IFIILGFFIFVLMVGAAIGII) and 39 to 59 (YLNGLILAAVIGAFYILIMVM). His144 contacts Zn(2+). Glu145 is a catalytic residue. Residue His148 participates in Zn(2+) binding. 2 consecutive transmembrane segments (helical) span residues 159-179 (IAIALVAVIAILSDLAMRMIF) and 202-222 (AIIYIVALIFVILAPIIATAI). Glu231 provides a ligand contact to Zn(2+).

This sequence belongs to the peptidase M48B family. Zn(2+) is required as a cofactor.

The protein localises to the cell membrane. In Listeria monocytogenes serotype 4b (strain CLIP80459), this protein is Protease HtpX homolog.